The sequence spans 93 residues: Small ribosomal subunit protein uS19 (93 aa).

The protein belongs to the universal ribosomal protein uS19 family.

Functionally, protein S19 forms a complex with S13 that binds strongly to the 16S ribosomal RNA. The polypeptide is Small ribosomal subunit protein uS19 (Arthrobacter sp. (strain FB24)).